Reading from the N-terminus, the 511-residue chain is Maturase K (511 aa).

It belongs to the intron maturase 2 family. MatK subfamily.

It localises to the plastid. The protein resides in the chloroplast. Usually encoded in the trnK tRNA gene intron. Probably assists in splicing its own and other chloroplast group II introns. The protein is Maturase K of Melica altissima (Siberian melic grass).